A 74-amino-acid chain; its full sequence is U3-agatoxin-Ao1b (74 aa).

The N-terminal stretch at 1-20 (MKAAISLIIFFAILFVVIEA) is a signal peptide. The propeptide occupies 21-34 (ISYEEGKELFQKER). 4 disulfides stabilise this stretch: cysteine 37–cysteine 53, cysteine 44–cysteine 58, cysteine 52–cysteine 68, and cysteine 60–cysteine 66. Serine amide is present on serine 72.

This sequence belongs to the neurotoxin 07 (Beta/delta-agtx) family. 02 (aga-3) subfamily. As to expression, expressed by the venom gland.

It localises to the secreted. Functionally, insecticidal neurotoxin that induces an irreversible spastic paralysis when injected into insects. Modifies presynaptic voltage-gated sodium channels (Nav), causing them to open at the normal resting potential of the nerve. This leads to spontaneous release of neurotransmitter and repetitive action potentials in motor neurons. This Agelena orientalis (Funnel-web spider) protein is U3-agatoxin-Ao1b.